The primary structure comprises 383 residues: Proton extrusion protein PxcA (383 aa).

4 helical membrane passes run 163-183 (ILLL…AYII), 258-278 (AVKN…VCFA), 306-326 (IILF…TVLL), and 341-361 (FVML…KYWI).

Belongs to the CemA family.

It is found in the cell inner membrane. Required for H(+) efflux immediately after light irradiation to form a rapid H(+) concentration gradient across the thylakoid membranes. Together with PxcL, contributes to transient H(+) uptake following dark to light transition. The protein is Proton extrusion protein PxcA of Synechococcus sp. (strain CC9902).